An 80-amino-acid polypeptide reads, in one-letter code: MYNVVVCLLTLSFLLLTGLSNTAEARVPYEAREGVWDQKVITEIKAEVGGSCSPHAHGRGPPNRPGSSNIPGSPKRCTKP.

Residues 1-25 form the signal peptide; that stretch reads MYNVVVCLLTLSFLLLTGLSNTAEA. The short motif at 45–59 is the SCOOP motif element; sequence KAEVGGSCSPHAHGR. Positions 50–80 are disordered; that stretch reads GSCSPHAHGRGPPNRPGSSNIPGSPKRCTKP. The SxS motif essential for MIK2 binding signature appears at 51–53; it reads SCS.

Belongs to the serine rich endogenous peptide (SCOOP) phytocytokine family. As to quaternary structure, interacts with MIK2 (via extracellular leucine-rich repeat domain); this interaction triggers the formation of complex between MIK2 and the BAK1/SERK3 and SERK4 coreceptors, and subsequent BAK1 activation by phosphorylation.

It localises to the cell membrane. The protein resides in the secreted. The protein localises to the extracellular space. Its subcellular location is the apoplast. Its function is as follows. Brassicaceae-specific phytocytokine (plant endogenous peptide released into the apoplast) perceived by MIK2 in a BAK1/SERK3 and SERK4 coreceptors-dependent manner, that modulates various physiological and antimicrobial processes including growth prevention and reactive oxygen species (ROS) response regulation. This Arabidopsis thaliana (Mouse-ear cress) protein is Serine rich endogenous peptide 18.